A 383-amino-acid polypeptide reads, in one-letter code: 8-amino-7-oxononanoate synthase (383 aa).

Arginine 23 is a substrate binding site. 110 to 111 (GF) is a binding site for pyridoxal 5'-phosphate. Histidine 135 contributes to the substrate binding site. 3 residues coordinate pyridoxal 5'-phosphate: serine 181, histidine 209, and threonine 235. Lysine 238 is subject to N6-(pyridoxal phosphate)lysine. Residue threonine 351 participates in substrate binding.

It belongs to the class-II pyridoxal-phosphate-dependent aminotransferase family. BioF subfamily. In terms of assembly, homodimer. It depends on pyridoxal 5'-phosphate as a cofactor.

It catalyses the reaction 6-carboxyhexanoyl-[ACP] + L-alanine + H(+) = (8S)-8-amino-7-oxononanoate + holo-[ACP] + CO2. It functions in the pathway cofactor biosynthesis; biotin biosynthesis. In terms of biological role, catalyzes the decarboxylative condensation of pimeloyl-[acyl-carrier protein] and L-alanine to produce 8-amino-7-oxononanoate (AON), [acyl-carrier protein], and carbon dioxide. This is 8-amino-7-oxononanoate synthase from Aliivibrio fischeri (strain MJ11) (Vibrio fischeri).